The chain runs to 168 residues: UPF0262 protein BBta_0898 (168 aa).

The protein belongs to the UPF0262 family.

The chain is UPF0262 protein BBta_0898 from Bradyrhizobium sp. (strain BTAi1 / ATCC BAA-1182).